Here is a 307-residue protein sequence, read N- to C-terminus: Coproporphyrin III ferrochelatase (307 aa).

Fe-coproporphyrin III-binding positions include Y12, R29, 45–46 (RY), S53, and Y124. Fe(2+) contacts are provided by H181 and E263.

This sequence belongs to the ferrochelatase family.

It localises to the cytoplasm. It carries out the reaction Fe-coproporphyrin III + 2 H(+) = coproporphyrin III + Fe(2+). Its pathway is porphyrin-containing compound metabolism; protoheme biosynthesis. Involved in coproporphyrin-dependent heme b biosynthesis. Catalyzes the insertion of ferrous iron into coproporphyrin III to form Fe-coproporphyrin III. The polypeptide is Coproporphyrin III ferrochelatase (Staphylococcus epidermidis (strain ATCC 12228 / FDA PCI 1200)).